The following is a 66-amino-acid chain: Large ribosomal subunit protein bL35c (66 aa).

This sequence belongs to the bacterial ribosomal protein bL35 family.

It is found in the plastid. The protein localises to the chloroplast. The protein is Large ribosomal subunit protein bL35c of Gracilaria tenuistipitata var. liui (Red alga).